We begin with the raw amino-acid sequence, 86 residues long: Large ribosomal subunit protein bL31B (86 aa).

Belongs to the bacterial ribosomal protein bL31 family. Type B subfamily. As to quaternary structure, part of the 50S ribosomal subunit.

This chain is Large ribosomal subunit protein bL31B, found in Streptococcus equi subsp. zooepidemicus (strain H70).